Reading from the N-terminus, the 369-residue chain is Biglycan (369 aa).

A signal peptide spans 1–16; the sequence is MCPLWLLAALLALSQA. A propeptide spanning residues 17 to 37 is cleaved from the precursor; it reads LPFEQKAFWDFTLDDGLPMLN. 2 O-linked (Xyl...) (glycosaminoglycan) serine glycosylation sites follow: Ser-42 and Ser-48. Disulfide bonds link Cys-64–Cys-70 and Cys-68–Cys-77. 12 LRR repeats span residues 83-103, 104-127, 128-151, 152-172, 173-196, 197-221, 222-242, 243-266, 267-290, 291-313, 314-343, and 344-369; these read KAVP…NNDI, SELR…NNKI, SKIH…KNHL, VEIP…DNRI, RKVP…GNPL, ENSG…EAKL, TGIP…HNKI, QAIE…HNQI, RMIE…NNKL, SRVP…TNNI, TKVG…NNPV, and PYWE…NYKK. Asn-271 and Asn-312 each carry an N-linked (GlcNAc...) asparagine glycan. Cys-322 and Cys-355 are oxidised to a cystine.

Belongs to the small leucine-rich proteoglycan (SLRP) family. SLRP class I subfamily. In terms of assembly, homodimer. Forms a ternary complex with MFAP2 and ELN. In terms of processing, the two attached glycosaminoglycan chains can be either chondroitin sulfate or dermatan sulfate. In terms of tissue distribution, found in several connective tissues, especially in articular cartilages.

The protein localises to the secreted. The protein resides in the extracellular space. It is found in the extracellular matrix. In terms of biological role, may be involved in collagen fiber assembly. This Ovis aries (Sheep) protein is Biglycan (BGN).